A 144-amino-acid polypeptide reads, in one-letter code: uncharacterized protein (144 aa).

The next 2 membrane-spanning stretches (helical) occupy residues 10–30 (ILTRSSIIIGVIILVASGLGP) and 60–80 (YVFLIYTVSLTKMVGTLAIAV).

It is found in the membrane. This is an uncharacterized protein from Saccharomyces cerevisiae (strain ATCC 204508 / S288c) (Baker's yeast).